The sequence spans 531 residues: uncharacterized protein (531 aa).

Residues 1 to 28 form the signal peptide; sequence MNTKGIIAKLTAGALIANLLICPANTLA. SLH domains are found at residues 29–85, 86–149, and 150–210; these read EKKT…QINK, QAKP…IGDL, and PTQF…SKRM. The region spanning 335-517 is the MurNAc-LAA domain; it reads IIIDPGHGGI…AAEAIYAGIL (183 aa).

In the C-terminal section; belongs to the N-acetylmuramoyl-L-alanine amidase 3 family.

The protein resides in the secreted. It is found in the cell wall. Its subcellular location is the S-layer. This is an uncharacterized protein from Bacillus anthracis.